Reading from the N-terminus, the 522-residue chain is Peptide chain release factor 3 (522 aa).

The region spanning 10–277 is the tr-type G domain; sequence ASRKTFAIIS…TFVDFAPAPS (268 aa). GTP contacts are provided by residues 19–26, 87–91, and 141–144; these read SHPDAGKT, DTPGH, and NKMD.

Belongs to the TRAFAC class translation factor GTPase superfamily. Classic translation factor GTPase family. PrfC subfamily.

The protein resides in the cytoplasm. Functionally, increases the formation of ribosomal termination complexes and stimulates activities of RF-1 and RF-2. It binds guanine nucleotides and has strong preference for UGA stop codons. It may interact directly with the ribosome. The stimulation of RF-1 and RF-2 is significantly reduced by GTP and GDP, but not by GMP. This chain is Peptide chain release factor 3, found in Listeria welshimeri serovar 6b (strain ATCC 35897 / DSM 20650 / CCUG 15529 / CIP 8149 / NCTC 11857 / SLCC 5334 / V8).